The following is a 189-amino-acid chain: B3 domain-containing protein At2g32645 (189 aa).

The segment at residues 33–133 (FNQVKTPDFL…KLCFALTPKI (101 aa)) is a DNA-binding region (TF-B3).

The protein localises to the nucleus. The chain is B3 domain-containing protein At2g32645 from Arabidopsis thaliana (Mouse-ear cress).